A 436-amino-acid polypeptide reads, in one-letter code: UDP-N-acetylmuramate--L-alanine ligase (436 aa).

An ATP-binding site is contributed by 108 to 114 (GAHGKTS).

The protein belongs to the MurCDEF family.

It is found in the cytoplasm. It carries out the reaction UDP-N-acetyl-alpha-D-muramate + L-alanine + ATP = UDP-N-acetyl-alpha-D-muramoyl-L-alanine + ADP + phosphate + H(+). It participates in cell wall biogenesis; peptidoglycan biosynthesis. Functionally, cell wall formation. The chain is UDP-N-acetylmuramate--L-alanine ligase from Bacillus cereus (strain Q1).